Consider the following 150-residue polypeptide: UPF0208 membrane protein VIBHAR_02941 (150 aa).

A run of 2 helical transmembrane segments spans residues 42–62 (FGIK…MAFN) and 70–90 (AIVV…WLGS).

This sequence belongs to the UPF0208 family.

It is found in the cell inner membrane. The sequence is that of UPF0208 membrane protein VIBHAR_02941 from Vibrio campbellii (strain ATCC BAA-1116).